An 83-amino-acid polypeptide reads, in one-letter code: Cell division topological specificity factor (83 aa).

It belongs to the MinE family.

Prevents the cell division inhibition by proteins MinC and MinD at internal division sites while permitting inhibition at polar sites. This ensures cell division at the proper site by restricting the formation of a division septum at the midpoint of the long axis of the cell. In Buchnera aphidicola subsp. Baizongia pistaciae (strain Bp), this protein is Cell division topological specificity factor.